Consider the following 389-residue polypeptide: TelA-like protein SH1505 (389 aa).

The protein belongs to the TelA family.

This chain is TelA-like protein SH1505, found in Staphylococcus haemolyticus (strain JCSC1435).